The sequence spans 185 residues: Lysine-rich arabinogalactan protein 17 (185 aa).

The signal sequence occupies residues 1 to 21; sequence MTRNILLTVTLICIVFITVGG. The tract at residues 25-160 is disordered; that stretch reads ATAPIHSPST…FSPAADDQSG (136 aa). A compositionally biased stretch (low complexity) spans 43 to 68; sequence SPAISPAAPTPESTEAPAKTPVEAPV. The span at 69–88 shows a compositional bias: pro residues; it reads EAPPSPTPASTPQISPPAPS. Basic residues predominate over residues 111–122; sequence TKHKKKTKKHKT. Positions 135-146 are enriched in pro residues; that stretch reads PPAPPGEAPGPG. Residue Ser-159 is the site of GPI-anchor amidated serine attachment. Positions 160–185 are cleaved as a propeptide — removed in mature form; sequence GAQRISVVIQMVGAAAIAWSLLVLAF.

This sequence belongs to the lysine-rich AGP family. In terms of processing, O-glycosylated on the hydroxyproline residues. In terms of tissue distribution, predominantly expressed in open flowers. Also expressed in leaves and stems, and at a lower level in roots.

It is found in the cell membrane. Proteoglycan that seems to be implicated in diverse developmental roles such as differentiation, cell-cell recognition, embryogenesis and programmed cell death. The polypeptide is Lysine-rich arabinogalactan protein 17 (AGP17) (Arabidopsis thaliana (Mouse-ear cress)).